We begin with the raw amino-acid sequence, 301 residues long: tRNA-cytidine(32) 2-sulfurtransferase (301 aa).

The short motif at 55–60 (SGGKDS) is the PP-loop motif element. C130, C133, and C221 together coordinate [4Fe-4S] cluster.

The protein belongs to the TtcA family. As to quaternary structure, homodimer. The cofactor is Mg(2+). [4Fe-4S] cluster is required as a cofactor.

It is found in the cytoplasm. The enzyme catalyses cytidine(32) in tRNA + S-sulfanyl-L-cysteinyl-[cysteine desulfurase] + AH2 + ATP = 2-thiocytidine(32) in tRNA + L-cysteinyl-[cysteine desulfurase] + A + AMP + diphosphate + H(+). It functions in the pathway tRNA modification. Catalyzes the ATP-dependent 2-thiolation of cytidine in position 32 of tRNA, to form 2-thiocytidine (s(2)C32). The sulfur atoms are provided by the cysteine/cysteine desulfurase (IscS) system. The polypeptide is tRNA-cytidine(32) 2-sulfurtransferase (Acinetobacter baylyi (strain ATCC 33305 / BD413 / ADP1)).